A 527-amino-acid chain; its full sequence is Heat shock factor protein HSF8 (527 aa).

Over residues 1 to 13 (MEPNSSGSGKAAV) the composition is skewed to low complexity. Disordered regions lie at residues 1–37 (MEPN…PSAN), 130–160 (RRKP…HSAS), 243–275 (NESN…ADGQ), 300–343 (SPRL…TSGK), and 476–501 (QSPS…QING). Positions 25–37 (QPAPAPAPMPSAN) are enriched in pro residues. The DNA-binding element occupies 39–133 (PPPFLVKTYD…LLKSISRRKP (95 aa)). Residues 136-157 (GHAQQQQQPHGHAQQQMQPPGH) show a composition bias toward low complexity. Polar residues-rich tracts occupy residues 319–328 (SPQSNASSGR) and 491–501 (NTSETKPQING).

It belongs to the HSF family. Homotrimer. Post-translationally, exhibits temperature-dependent phosphorylation.

Its subcellular location is the nucleus. DNA-binding protein that specifically binds heat shock promoter elements (HSE) and activates transcription. The protein is Heat shock factor protein HSF8 (HSF8) of Solanum peruvianum (Peruvian tomato).